A 147-amino-acid polypeptide reads, in one-letter code: uncharacterized protein (147 aa).

This is an uncharacterized protein from Saccharomyces cerevisiae (strain ATCC 204508 / S288c) (Baker's yeast).